A 129-amino-acid polypeptide reads, in one-letter code: Succinate dehydrogenase subunit 3-2, mitochondrial (129 aa).

The transit peptide at 1-58 (MEKYQSKARFAPLSDAPFALRGALGSSNSSFNNIDHLRQSSSSGQARSYTSSPLGALR) directs the protein to the mitochondrion. The span at 27–53 (SNSSFNNIDHLRQSSSSGQARSYTSSP) shows a compositional bias: polar residues. Residues 27-66 (SNSSFNNIDHLRQSSSSGQARSYTSSPLGALRPKMFPSGN) form a disordered region. Residue His-87 coordinates heme. Residues 105 to 127 (IFGAALGAVIISIPLATKFSLMF) form a helical membrane-spanning segment.

As to quaternary structure, component of complex II composed of eight subunits in plants: four classical SDH subunits SDH1, SDH2, SDH3 and SDH4 (a flavoprotein (FP), an iron-sulfur protein (IP), and a cytochrome b composed of a large and a small subunit.), as well as four subunits unknown in mitochondria from bacteria and heterotrophic eukaryotes. The cofactor is heme.

It is found in the mitochondrion inner membrane. It participates in carbohydrate metabolism; tricarboxylic acid cycle. Its function is as follows. Membrane-anchoring subunit of succinate dehydrogenase (SDH). This chain is Succinate dehydrogenase subunit 3-2, mitochondrial, found in Oryza sativa subsp. japonica (Rice).